Reading from the N-terminus, the 624-residue chain is PTS system mannitol-specific EIICBA component (624 aa).

The PTS EIIC type-2 domain occupies 13-336; the sequence is FGRFLSNMVM…SFVIASFFLK (324 aa). Transmembrane regions (helical) follow at residues 25 to 46, 51 to 71, 135 to 156, 166 to 186, 274 to 293, and 314 to 335; these read IGAF…WLPN, KLVG…SGGK, SSGI…PAVK, VDIL…EPAK, VIAG…AGLV, and VGVL…SFFL. A PTS EIIB type-2 domain is found at 372–463; sequence QKIFVACDAG…LVQDLSNTKV (92 aa). Cys-378 functions as the Phosphocysteine intermediate; for EIIB activity in the catalytic mechanism. Position 378 is a phosphocysteine; by EIIA (Cys-378). In terms of domain architecture, PTS EIIA type-2 spans 482–624; the sequence is FVLTEKQVFL…VEKVLALLKA (143 aa). His-542 functions as the Tele-phosphohistidine intermediate; for EIIA activity in the catalytic mechanism. His-542 is subject to Phosphohistidine; by HPr.

Homodimer. Post-translationally, an intramolecular phosphotransfer takes places between His-542 and Cys-378.

It is found in the cell inner membrane. It catalyses the reaction D-mannitol(out) + N(pros)-phospho-L-histidyl-[protein] = D-mannitol 1-phosphate(in) + L-histidyl-[protein]. In terms of biological role, the phosphoenolpyruvate-dependent sugar phosphotransferase system (sugar PTS), a major carbohydrate active transport system, catalyzes the phosphorylation of incoming sugar substrates concomitantly with their translocation across the cell membrane. This system is involved in D-mannitol transport. The chain is PTS system mannitol-specific EIICBA component (mtlA) from Pasteurella multocida (strain Pm70).